The chain runs to 868 residues: DNA replication licensing factor MCM2 (868 aa).

2 disordered regions span residues 1-65 (MSDN…DEVE) and 87-106 (NRDRYDPDQVDDREQQELSL). Phosphoserine is present on residues Ser-14, Ser-16, and Ser-23. Acidic residues predominate over residues 49 to 65 (EGDDNEVDDVPDIDEVE). A phosphoserine mark is found at Ser-164 and Ser-170. Residues 341–367 (CLKCGSILGPFFQDSNEEIRISFCTNC) form a C4-type zinc finger. The region spanning 493–700 (IIDKIISSMA…ADERLATFVV (208 aa)) is the MCM domain. 543–550 (GDPGTAKS) provides a ligand contact to ATP. The Arginine finger motif lies at 675–678 (SRFD). The tract at residues 704–728 (VRSHPENDEDREGEELKNNGESAIE) is disordered.

It belongs to the MCM family. In terms of assembly, component of the MCM2-7 complex. The complex forms a toroidal hexameric ring with the proposed subunit order MCM2-MCM6-MCM4-MCM7-MCM3-MCM5; loaded onto DNA, forms a head-head double hexamer.

It localises to the nucleus. It catalyses the reaction ATP + H2O = ADP + phosphate + H(+). Its function is as follows. Acts as a component of the MCM2-7 complex (MCM complex) which is the putative replicative helicase essential for 'once per cell cycle' DNA replication initiation and elongation in eukaryotic cells. The active ATPase sites in the MCM2-7 ring are formed through the interaction surfaces of two neighboring subunits such that a critical structure of a conserved arginine finger motif is provided in trans relative to the ATP-binding site of the Walker A box of the adjacent subunit. The six ATPase active sites, however, are likely to contribute differentially to the complex helicase activity; specifically the MCM2-MCM5 association is proposed to be reversible and to mediate a open ring conformation which may facilitate DNA loading. Once loaded onto DNA, double hexamers can slide on dsDNA in the absence of ATPase activity. Necessary for cell growth. The polypeptide is DNA replication licensing factor MCM2 (MCM2) (Saccharomyces cerevisiae (strain ATCC 204508 / S288c) (Baker's yeast)).